Consider the following 474-residue polypeptide: ATP synthase subunit beta (474 aa).

155-162 (GGAGVGKT) contributes to the ATP binding site.

Belongs to the ATPase alpha/beta chains family. F-type ATPases have 2 components, CF(1) - the catalytic core - and CF(0) - the membrane proton channel. CF(1) has five subunits: alpha(3), beta(3), gamma(1), delta(1), epsilon(1). CF(0) has three main subunits: a(1), b(2) and c(9-12). The alpha and beta chains form an alternating ring which encloses part of the gamma chain. CF(1) is attached to CF(0) by a central stalk formed by the gamma and epsilon chains, while a peripheral stalk is formed by the delta and b chains.

It localises to the cell inner membrane. The catalysed reaction is ATP + H2O + 4 H(+)(in) = ADP + phosphate + 5 H(+)(out). Functionally, produces ATP from ADP in the presence of a proton gradient across the membrane. The catalytic sites are hosted primarily by the beta subunits. The protein is ATP synthase subunit beta of Sorangium cellulosum (strain So ce56) (Polyangium cellulosum (strain So ce56)).